We begin with the raw amino-acid sequence, 533 residues long: Drimenyl diphosphate synthase (533 aa).

Arg132, Lys133, Gln163, and Trp165 together coordinate (2E,6E)-farnesyl diphosphate. Residue Glu169 coordinates Mg(2+). PFTB repeat units lie at residues 274–316 (VTPM…RRAA), 324–366 (VAEA…AHDP), 372–415 (VDEA…AAHG), 425–466 (AERA…ARGP), and 474–517 (LDRA…FVLL). Asp303 acts as the Proton donor in catalysis. Arg501 contributes to the (2E,6E)-farnesyl diphosphate binding site.

It belongs to the terpene cyclase/mutase family. Requires Mg(2+) as cofactor. Ni(2+) is required as a cofactor. It depends on Co(2+) as a cofactor.

It catalyses the reaction (2E,6E)-farnesyl diphosphate = (5S,9S,10S)-drim-7-en-11-yl diphosphate. Functionally, catalyzes the cyclization of farnesyl diphosphate (FPP) to drimenyl diphosphate. Cannot use geranylgeranyl diphosphate (GGPP) as substrate. The polypeptide is Drimenyl diphosphate synthase (Streptomyces showdoensis).